The chain runs to 408 residues: Imidazolonepropionase (408 aa).

Fe(3+) contacts are provided by His-73 and His-75. The Zn(2+) site is built by His-73 and His-75. 4-imidazolone-5-propanoate is bound by residues Arg-82, Tyr-145, and His-178. Tyr-145 serves as a coordination point for N-formimidoyl-L-glutamate. His-243 serves as a coordination point for Fe(3+). His-243 contributes to the Zn(2+) binding site. Residue Gln-246 participates in 4-imidazolone-5-propanoate binding. A Fe(3+)-binding site is contributed by Asp-318. Asp-318 is a binding site for Zn(2+). Positions 320 and 322 each coordinate N-formimidoyl-L-glutamate. Ser-323 lines the 4-imidazolone-5-propanoate pocket.

It belongs to the metallo-dependent hydrolases superfamily. HutI family. It depends on Zn(2+) as a cofactor. Requires Fe(3+) as cofactor.

The protein resides in the cytoplasm. It catalyses the reaction 4-imidazolone-5-propanoate + H2O = N-formimidoyl-L-glutamate. It functions in the pathway amino-acid degradation; L-histidine degradation into L-glutamate; N-formimidoyl-L-glutamate from L-histidine: step 3/3. In terms of biological role, catalyzes the hydrolytic cleavage of the carbon-nitrogen bond in imidazolone-5-propanoate to yield N-formimidoyl-L-glutamate. It is the third step in the universal histidine degradation pathway. The sequence is that of Imidazolonepropionase from Shewanella sediminis (strain HAW-EB3).